We begin with the raw amino-acid sequence, 227 residues long: GFP-like non-fluorescent chromoprotein (227 aa).

The segment at residues 63 to 65 is a cross-link (5-imidazolinone (Ala-Gly)); that stretch reads AYG. Position 64 is a 2,3-didehydrotyrosine (tyrosine 64).

It belongs to the GFP family. As to quaternary structure, homotetramer. In terms of processing, contains a chromophore consisting of modified amino acid residues. The chromophore is formed by autocatalytic backbone condensation between Xaa-N and Gly-(N+2), and oxidation of Tyr-(N+1) to didehydrotyrosine. Maturation of the chromophore requires nothing other than molecular oxygen. The precise stereochemistry of the tyrosine has not been determined.

Functionally, non-fluorescent pigment protein that is mauve in color. The wild-type form is non-fluorescent. The protein is GFP-like non-fluorescent chromoprotein of Condylactis gigantea (Giant Caribbean anemone).